The chain runs to 42 residues: Aspartate-semialdehyde dehydrogenase leader peptide (42 aa).

The sequence is that of Aspartate-semialdehyde dehydrogenase leader peptide from Streptococcus mutans serotype c (strain ATCC 700610 / UA159).